Reading from the N-terminus, the 538-residue chain is uncharacterized protein (538 aa).

The first 17 residues, 1-17, serve as a signal peptide directing secretion; that stretch reads MNLQILLLLLLFCHVAA. N115 carries N-linked (GlcNAc...) asparagine glycosylation.

This is an uncharacterized protein from Caenorhabditis elegans.